Reading from the N-terminus, the 340-residue chain is Putative phosphatidylcholine:ceramide cholinephosphotransferase 3 (340 aa).

The segment at 1–25 (MGSVSKTVISARGASPDDEQNGTKN) is disordered. Helical transmembrane passes span 36 to 56 (CIFLFFFLFIAGMSNWAVLAY), 81 to 101 (SSLGDFCVALCIVMLGALLVI), 178 to 198 (LLFSGHTLVMVTCSLAVAYYL), and 202 to 222 (IKPLQWVSHVACLIGMICMTI). Residue histidine 183 is part of the active site. Over 223–340 (SRTHYTIDVV…SSSSTYPLPC (118 aa)) the chain is Cytoplasmic. Active-site residues include histidine 226 and aspartate 230. Residues 294–313 (STPRGQERGGASAESSDSSV) are disordered.

This sequence belongs to the sphingomyelin synthase family.

The protein localises to the membrane. It catalyses the reaction an N-acyl-sphingoid base + a 1,2-diacyl-sn-glycero-3-phosphocholine = an N-(acyl)-sphingosylphosphocholine + a 1,2-diacyl-sn-glycerol. The catalysed reaction is an N-acylsphing-4-enine + a 1,2-diacyl-sn-glycero-3-phosphocholine = a sphingomyelin + a 1,2-diacyl-sn-glycerol. The enzyme catalyses an N-acyl-15-methylhexadecasphing-4-enine + a 1,2-diacyl-sn-glycero-3-phosphocholine = an N-acyl-15-methylhexadecasphing-4-enine-1-phosphocholine + a 1,2-diacyl-sn-glycerol. Its pathway is lipid metabolism; sphingolipid metabolism. Its function is as follows. Bidirectional lipid cholinephosphotransferase capable of converting phosphatidylcholine (PC) and ceramide to sphingomyelin (SM) and diacylglycerol (DAG) and vice versa. Direction is dependent on the relative concentrations of DAG and ceramide as phosphocholine acceptors. Directly and specifically recognizes the choline head group on the substrate. Also requires two fatty chains on the choline-P donor molecule in order to be recognized efficiently as a substrate. Does not function strictly as a SM synthase. C.elegans contains specific sphingoid bases, which are unique or different in structure compared to the sphingoid bases found in other animals. Two examples of these distinctive compounds are: 15-methylhexadecasphinganine and 15-methylhexadecasphing-4-enine. The protein is Putative phosphatidylcholine:ceramide cholinephosphotransferase 3 (sms-3) of Caenorhabditis elegans.